The following is a 238-amino-acid chain: Purine nucleoside phosphorylase DeoD-type 1 (238 aa).

H5 contacts a purine D-ribonucleoside. Phosphate is bound by residues G21, R25, R44, and R88–S91. A purine D-ribonucleoside contacts are provided by residues E180–E182 and S204–D205. Residue D205 is the Proton donor of the active site.

It belongs to the PNP/UDP phosphorylase family. As to quaternary structure, homohexamer; trimer of homodimers.

The enzyme catalyses a purine D-ribonucleoside + phosphate = a purine nucleobase + alpha-D-ribose 1-phosphate. The catalysed reaction is a purine 2'-deoxy-D-ribonucleoside + phosphate = a purine nucleobase + 2-deoxy-alpha-D-ribose 1-phosphate. In terms of biological role, catalyzes the reversible phosphorolytic breakdown of the N-glycosidic bond in the beta-(deoxy)ribonucleoside molecules, with the formation of the corresponding free purine bases and pentose-1-phosphate. In Aliivibrio fischeri (strain ATCC 700601 / ES114) (Vibrio fischeri), this protein is Purine nucleoside phosphorylase DeoD-type 1.